The sequence spans 250 residues: Indole-3-glycerol phosphate synthase (250 aa).

Belongs to the TrpC family.

The enzyme catalyses 1-(2-carboxyphenylamino)-1-deoxy-D-ribulose 5-phosphate + H(+) = (1S,2R)-1-C-(indol-3-yl)glycerol 3-phosphate + CO2 + H2O. It functions in the pathway amino-acid biosynthesis; L-tryptophan biosynthesis; L-tryptophan from chorismate: step 4/5. This Metallosphaera sedula (strain ATCC 51363 / DSM 5348 / JCM 9185 / NBRC 15509 / TH2) protein is Indole-3-glycerol phosphate synthase.